The chain runs to 206 residues: N-(5'-phosphoribosyl)anthranilate isomerase (206 aa).

This sequence belongs to the TrpF family.

It catalyses the reaction N-(5-phospho-beta-D-ribosyl)anthranilate = 1-(2-carboxyphenylamino)-1-deoxy-D-ribulose 5-phosphate. Its pathway is amino-acid biosynthesis; L-tryptophan biosynthesis; L-tryptophan from chorismate: step 3/5. This Chlamydia felis (strain Fe/C-56) (Chlamydophila felis) protein is N-(5'-phosphoribosyl)anthranilate isomerase.